A 131-amino-acid chain; its full sequence is Superoxide dismutase [Ni] (131 aa).

The propeptide occupies 1–14 (MLSRLFAPKVKVSA). Residues H15, C16, and C20 each contribute to the Ni(2+) site.

Belongs to the nickel superoxide dismutase family. Homohexamer. The hexameric protein has roughly the shape of a hollow sphere with an outer diameter of 72 Angstroms and a large inner cavity. The cofactor is Ni(2+).

Its subcellular location is the cytoplasm. It catalyses the reaction 2 superoxide + 2 H(+) = H2O2 + O2. This chain is Superoxide dismutase [Ni] (sodN), found in Streptomyces seoulensis.